Consider the following 665-residue polypeptide: Translation factor guf1, mitochondrial (665 aa).

The transit peptide at 1-53 (MRGCLQVLRWLSTSPARRPVSSGLRLRSYEIVSPSILRPFTSTVRRQAQASRN) directs the protein to the mitochondrion. One can recognise a tr-type G domain in the interval 67-247 (ERFRNFCIVA…TVIERIPAPV (181 aa)). Residues 76 to 83 (AHVDHGKS), 140 to 144 (DTPGH), and 194 to 197 (NKVD) each bind GTP.

Belongs to the TRAFAC class translation factor GTPase superfamily. Classic translation factor GTPase family. LepA subfamily.

The protein resides in the mitochondrion inner membrane. The enzyme catalyses GTP + H2O = GDP + phosphate + H(+). In terms of biological role, promotes mitochondrial protein synthesis. May act as a fidelity factor of the translation reaction, by catalyzing a one-codon backward translocation of tRNAs on improperly translocated ribosomes. Binds to mitochondrial ribosomes in a GTP-dependent manner. This chain is Translation factor guf1, mitochondrial (guf1), found in Talaromyces stipitatus (strain ATCC 10500 / CBS 375.48 / QM 6759 / NRRL 1006) (Penicillium stipitatum).